A 366-amino-acid polypeptide reads, in one-letter code: Alanine racemase (366 aa).

Residue lysine 40 is the Proton acceptor; specific for D-alanine of the active site. Lysine 40 is modified (N6-(pyridoxal phosphate)lysine). Substrate is bound at residue arginine 136. The active-site Proton acceptor; specific for L-alanine is tyrosine 263. Position 310 (methionine 310) interacts with substrate.

Belongs to the alanine racemase family. Pyridoxal 5'-phosphate serves as cofactor.

It catalyses the reaction L-alanine = D-alanine. It participates in amino-acid biosynthesis; D-alanine biosynthesis; D-alanine from L-alanine: step 1/1. Functionally, catalyzes the interconversion of L-alanine and D-alanine. May also act on other amino acids. The sequence is that of Alanine racemase (alr) from Streptococcus pyogenes serotype M6 (strain ATCC BAA-946 / MGAS10394).